The sequence spans 460 residues: Photosystem II CP43 reaction center protein (460 aa).

Residues M1 to K35 lie on the Cytoplasmic side of the membrane. Residues L36–E58 traverse the membrane as a helical segment. Over V59–F98 the chain is Lumenal, thylakoid. The chain crosses the membrane as a helical span at residues F99–L121. The Cytoplasmic portion of the chain corresponds to R122–N142. A helical transmembrane segment spans residues Q143–K165. Over A166–I220 the chain is Lumenal, thylakoid. A helical transmembrane segment spans residues I221 to L240. At T241–G255 the chain is on the cytoplasmic side. Residues E256–F276 form a helical membrane-spanning segment. Topologically, residues V277–A411 are lumenal, thylakoid. Residues E341 and R344 each coordinate [CaMn4O5] cluster. The helical transmembrane segment at W412–R436 threads the bilayer. At A437–D460 the chain is on the cytoplasmic side.

The protein belongs to the PsbB/PsbC family. PsbC subfamily. As to quaternary structure, PSII is composed of 1 copy each of membrane proteins PsbA, PsbB, PsbC, PsbD, PsbE, PsbF, PsbH, PsbI, PsbJ, PsbK, PsbL, PsbM, PsbT, PsbX, PsbY, PsbZ, Psb30/Ycf12, peripheral proteins PsbO, CyanoQ (PsbQ), PsbU, PsbV and a large number of cofactors. It forms dimeric complexes. The cofactor is Binds multiple chlorophylls and provides some of the ligands for the Ca-4Mn-5O cluster of the oxygen-evolving complex. It may also provide a ligand for a Cl- that is required for oxygen evolution. PSII binds additional chlorophylls, carotenoids and specific lipids..

Its subcellular location is the cellular thylakoid membrane. Its function is as follows. One of the components of the core complex of photosystem II (PSII). PSII binds chlorophyll and helps catalyze the primary light-induced photochemical processes of PSII. PSII is a light-driven water:plastoquinone oxidoreductase, using light energy to abstract electrons from H(2)O, generating O(2) and a proton gradient subsequently used for ATP formation. Required for correct assembly of PSII. The protein is Photosystem II CP43 reaction center protein of Synechocystis sp. (strain ATCC 27184 / PCC 6803 / Kazusa).